Reading from the N-terminus, the 132-residue chain is C-glycoside deglycosidase beta subunit (132 aa).

The protein belongs to the C-glycoside deglycosidase beta subunit family. As to quaternary structure, heterodimer composed of an alpha subunit (CarB2) and a beta subunit (CarC2). A divalent metal cation is required as a cofactor.

The catalysed reaction is 3''-dehydroorientin = 1,5-anhydro-D-erythro-hex-1-en-3-ulose + luteolin. Its activity is regulated as follows. Activity is strongly reduced in the presence of chelating agents. Functionally, carbon-carbon bond-cleaving enzyme which participates in the metabolism of C-glycosides. Acts on the C8-glycosylated compound 3''-dehydroorientin (3''-oxo-orientin). The protein is C-glycoside deglycosidase beta subunit of Arthrobacter globiformis (strain ATCC 8010 / DSM 20124 / JCM 1332 / NBRC 12137 / NCIMB 8907 / NRRL B-2979 / 168).